The primary structure comprises 244 residues: Agamous-like MADS-box protein MADS2 (244 aa).

Positions 1-61 (MGRGRVELKR…GKLYEFCSSS (61 aa)) constitute an MADS-box domain. In terms of domain architecture, K-box spans 88 to 178 (EQSSYREYLK…TRKLDEISVK (91 aa)).

Expressed in flowers and seeds.

Its subcellular location is the nucleus. Probable transcription factor involved in flower development. This Vitis vinifera (Grape) protein is Agamous-like MADS-box protein MADS2.